The sequence spans 66 residues: Cocaine- and amphetamine-regulated transcript protein (66 aa).

2 disulfide bridges follow: Cys34–Cys52 and Cys40–Cys60.

Belongs to the CART family.

Its subcellular location is the secreted. Its function is as follows. Satiety factor closely associated with the actions of leptin and neuropeptide y; this anorectic peptide inhibits both normal and starvation-induced feeding and completely blocks the feeding response induced by neuropeptide Y and regulated by leptin in the hypothalamus. The sequence is that of Cocaine- and amphetamine-regulated transcript protein (CARTPT) from Sus scrofa (Pig).